Here is an 89-residue protein sequence, read N- to C-terminus: Small ribosomal subunit protein uS15 (89 aa).

It belongs to the universal ribosomal protein uS15 family. Part of the 30S ribosomal subunit. Forms a bridge to the 50S subunit in the 70S ribosome, contacting the 23S rRNA.

Its function is as follows. One of the primary rRNA binding proteins, it binds directly to 16S rRNA where it helps nucleate assembly of the platform of the 30S subunit by binding and bridging several RNA helices of the 16S rRNA. Forms an intersubunit bridge (bridge B4) with the 23S rRNA of the 50S subunit in the ribosome. This chain is Small ribosomal subunit protein uS15, found in Mycolicibacterium vanbaalenii (strain DSM 7251 / JCM 13017 / BCRC 16820 / KCTC 9966 / NRRL B-24157 / PYR-1) (Mycobacterium vanbaalenii).